The following is a 654-amino-acid chain: MSNLILTPSNNGTERPYRSRKTRPCDNCRLRKSRCVVESIGNPCLLCTQLKIPCTYHLPPIKRNKQKKQQDSVSDDTPSEATTTTNDDRDPKYNALGNNLDAVRGKVISPTQGSDARGPDGRQVPLNLAGITEMYHTSDDKFDKLGLDDSLNYPYVLGPTCDSDIDLIREYFSFENGVCSFDNMTVKYVSTSSKSPVMYILDPAYENDRHSDFSRYDHALHDLLSTYIDEATGRTLVNLYFSHVHPSYPILHGPRFLLSYKNGSRNVPSILLAALYSVALTYWPSDSRSFGAPPLDQRKMWTIVEEGLNFHFTQPRLSTIQAALLYLISRPLHNMYSLSSILSRTTVLSQLLGFNHDCTEWKIPNEEKTIRKRIWWAIFIADKWYSMYFGLATNIHEDDFVVPKIESDESLPLEITSSHSFKTFLKMIELSSLLQDILQDLFTVRALTRHSKNNRSISYQIIGFFTRLNSIRPVEFTEPALGVASLKIQFDAVEILLWKTALRFNLPDFQSADDLFVCVEKSVSNFVQITANSSGDFFWPYAGFHFSTLVSLLIRLHLDFHTNNTYGARAFSLLDAFVRHCITLHEAGFDFVEMAIRRSSSLLKELGKDHPHLLALRDDIFNSNDSRGEEAYNHVPEQLFDPWNPHSWTFPKSD.

A compositionally biased stretch (polar residues) spans 1 to 13; it reads MSNLILTPSNNGT. The segment at 1 to 23 is disordered; that stretch reads MSNLILTPSNNGTERPYRSRKTR. The zn(2)-C6 fungal-type DNA-binding region spans 25–54; that stretch reads CDNCRLRKSRCVVESIGNPCLLCTQLKIPC. The segment at 63–96 is disordered; it reads RNKQKKQQDSVSDDTPSEATTTTNDDRDPKYNAL.

Its subcellular location is the cytoplasm. It is found in the nucleus. This is an uncharacterized protein from Schizosaccharomyces pombe (strain 972 / ATCC 24843) (Fission yeast).